The primary structure comprises 458 residues: Histone acetyltransferase Tip60 homolog (458 aa).

The tract at residues 1–24 is disordered; sequence MTEPKKEIIEDENHGISKKIPTDP. The Tudor-knot domain maps to 30 to 86; that stretch reads VTEGCRLLVMMASQEEERWAEVISRCRAANGSIKFYVHYIDCNRRLDEWVQSDRLNL. The segment at 94–123 is disordered; it reads KGGKKGAHLREENRDSNENEGKKSGRKRKI. The span at 101 to 116 shows a compositional bias: basic and acidic residues; that stretch reads HLREENRDSNENEGKK. The 279-residue stretch at 168–446 folds into the MYST-type HAT domain; sequence TRIRNVECIE…INPAALQWRP (279 aa). The C2HC MYST-type zinc-finger motif lies at 201–226; it reads IYICEFCLKYLKSKTCLKRHMEKCAM. Lysine 268 bears the N6-acetyllysine; by autocatalysis mark. Residues 311 to 313 and 318 to 324 contribute to the acetyl-CoA site; these read ILV and QKKGYGS. Residue glutamate 344 is the Proton donor/acceptor of the active site. Acetyl-CoA-binding residues include serine 348 and serine 357.

This sequence belongs to the MYST (SAS/MOZ) family. In terms of assembly, interacts with transcription-associated protein trr-1. Probably a component of a complex with histone acetyltransferase (HAT) activity, at least composed of mys-1 and trr-1. Post-translationally, autoacetylation at Lys-268 is required for binding histones with high affinity and for proper function.

It is found in the nucleus. It catalyses the reaction L-lysyl-[protein] + acetyl-CoA = N(6)-acetyl-L-lysyl-[protein] + CoA + H(+). In terms of biological role, probable catalytic subunit of the Tip60 chromatin-remodeling complex. Plays a role in acetylation of nucleosomal histone H4 and perhaps also H2A, probably acting as a component of the Tip60 histone acetyltransferase complex. Acts in the determination of vulval and distal tip cell (DTC) precursor cell fates. Involved in the positive regulation of transcription factor daf-16, probably acting by histone acetylation; thereby modulating stress resistance. The sequence is that of Histone acetyltransferase Tip60 homolog from Caenorhabditis elegans.